The sequence spans 383 residues: Probable purine permease 16 (383 aa).

Transmembrane regions (helical) follow at residues 30–50 (ISVF…MLLL), 72–92 (WTQA…FFIL), 113–133 (VLSL…LYAL), 138–158 (VGWG…SAFI), 166–186 (WIII…PAFA), 203–223 (LILI…QLGF), 247–267 (ICVS…SGEF), 297–317 (VWAV…ADVV), 322–342 (SPVV…EFGW), and 346–363 (GALL…YSLH).

This sequence belongs to the purine permeases (TC 2.A.7.14) family.

It is found in the membrane. The polypeptide is Probable purine permease 16 (PUP16) (Arabidopsis thaliana (Mouse-ear cress)).